Here is a 230-residue protein sequence, read N- to C-terminus: Heptaprenylglyceryl phosphate synthase (230 aa).

Residue Lys-12 participates in sn-glycerol 1-phosphate binding. Mg(2+) is bound by residues Asp-14 and Thr-40. Sn-glycerol 1-phosphate-binding positions include 159-164 (YIEYSG), Gly-189, and 209-210 (GD).

This sequence belongs to the GGGP/HepGP synthase family. Group I subfamily. Homodimer. Requires Mg(2+) as cofactor.

The enzyme catalyses sn-glycerol 1-phosphate + all-trans-heptaprenyl diphosphate = 3-heptaprenyl-sn-glycero-1-phosphate + diphosphate. Its pathway is membrane lipid metabolism; glycerophospholipid metabolism. Functionally, prenyltransferase that catalyzes in vivo the transfer of the heptaprenyl moiety of heptaprenyl pyrophosphate (HepPP; 35 carbon atoms) to the C3 hydroxyl of sn-glycerol-1-phosphate (G1P), producing heptaprenylglyceryl phosphate (HepGP). This reaction is an ether-bond-formation step in the biosynthesis of archaea-type G1P-based membrane lipids found in Bacillales. The polypeptide is Heptaprenylglyceryl phosphate synthase (Staphylococcus aureus (strain MRSA252)).